Consider the following 545-residue polypeptide: T-complex protein 1 subunit gamma (545 aa).

Met1 bears the N-acetylmethionine mark. The interval 1-24 is disordered; that stretch reads MMGHRPVLVLSQNTKRESGRKVQS. Ser11 carries the phosphoserine modification. Residue Lys15 forms a Glycyl lysine isopeptide (Lys-Gly) (interchain with G-Cter in SUMO2) linkage. Gly42 is a binding site for ADP. Gly42 provides a ligand contact to ATP. Asp93 provides a ligand contact to Mg(2+). The ADP site is built by Gly94, Thr95, Thr96, Ser97, Thr162, and Lys163. The ATP site is built by Gly94, Thr95, and Thr96. Ser170 is subject to Phosphoserine. Lys222 carries the post-translational modification N6-acetyllysine. Phosphoserine is present on residues Ser243 and Ser244. Residue Tyr247 is modified to Phosphotyrosine. Glycyl lysine isopeptide (Lys-Gly) (interchain with G-Cter in SUMO2) cross-links involve residues Lys248 and Lys249. Phosphoserine is present on Ser252. Cys366 and Cys372 form a disulfide bridge. Lys381 participates in a covalent cross-link: Glycyl lysine isopeptide (Lys-Gly) (interchain with G-Cter in SUMO2). Residue Gly411 participates in ADP binding. An ATP-binding site is contributed by Gly411. Phosphothreonine occurs at positions 430 and 459. 4 residues coordinate ADP: Gly482, Glu483, Glu497, and Lys502. Gly482 contributes to the ATP binding site. Residue Glu497 coordinates ATP. Positions 526-545 are disordered; the sequence is HKKKGDDQNRQTGAPDAGQE.

This sequence belongs to the TCP-1 chaperonin family. In terms of assembly, component of the chaperonin-containing T-complex (TRiC), a hexadecamer composed of two identical back-to-back stacked rings enclosing a protein folding chamber. Each ring is made up of eight different subunits: TCP1/CCT1, CCT2, CCT3, CCT4, CCT5, CCT6A/CCT6, CCT7, CCT8. Interacts with PACRG. Interacts with DNAAF4. Interacts with DLEC1.

The protein resides in the cytoplasm. The catalysed reaction is ATP + H2O = ADP + phosphate + H(+). Functionally, component of the chaperonin-containing T-complex (TRiC), a molecular chaperone complex that assists the folding of actin, tubulin and other proteins upon ATP hydrolysis. The TRiC complex mediates the folding of WRAP53/TCAB1, thereby regulating telomere maintenance. As part of the TRiC complex may play a role in the assembly of BBSome, a complex involved in ciliogenesis regulating transports vesicles to the cilia. This is T-complex protein 1 subunit gamma (Cct3) from Rattus norvegicus (Rat).